A 543-amino-acid polypeptide reads, in one-letter code: Formin-binding protein 1-like (543 aa).

The 263-residue stretch at 1 to 263 (MSWGTELWDQ…AAKSVDERRD (263 aa)) folds into the F-BAR domain. 2 coiled-coil regions span residues 66-258 (FTSC…AKSV) and 334-426 (LEDF…QRSE). In terms of domain architecture, REM-1 spans 339 to 416 (HLPPEQRRKR…IHKNEGWLSE (78 aa)). The interval 424 to 467 (RSERRHSAEANHLVAQGRESPEGSYTEDANQEGRVQPQHHAHPE) is disordered. The 62-residue stretch at 479 to 540 (PAIGHCKSLY…PTSYIEITLE (62 aa)) folds into the SH3 domain.

This sequence belongs to the FNBP1 family. Homodimerizes, the dimers can polymerize end-to-end to form filamentous structures. Interacts with GTP-bound cdc42 and wasl/n-wasp.

The protein resides in the cytoplasm. It localises to the cytoskeleton. The protein localises to the cell cortex. It is found in the cytoplasmic vesicle. Its subcellular location is the cell membrane. In terms of biological role, required to coordinate membrane tubulation with reorganization of the actin cytoskeleton during endocytosis. Essential for autophagy of intracellular bacterial pathogens. Promotes cdc42-induced actin polymerization by activating the wasl-waspip complex, the predominant form of wasl/n-wasp in cells. The chain is Formin-binding protein 1-like (fnbp1l) from Xenopus laevis (African clawed frog).